A 757-amino-acid polypeptide reads, in one-letter code: E3 ubiquitin-protein ligase SMURF1 (757 aa).

The C2 domain occupies 1-120; it reads MSNPGTRRNG…TGYQRLDLCK (120 aa). Positions 193–237 are disordered; that stretch reads GNCRFVESPSQDQRLQAQRLRNPDVRGSLQTPQNRPHGHQSPELP. At Ser-200 the chain carries Phosphoserine. 2 WW domains span residues 234 to 267 and 306 to 339; these read PELP…DPRI and GPLP…DPRL. Glycyl lysine isopeptide (Lys-Gly) (interchain with G-Cter in ubiquitin) cross-links involve residues Lys-381 and Lys-383. Residues 420–757 form the HECT domain; it reads RPKDLKKRLM…VEETCGFAVE (338 aa). The active-site Glycyl thioester intermediate is Cys-725.

In terms of assembly, interacts with TRAF4. Interacts (via HECT domain) with FBXL15 (via LRR repeats). Interacts with SMAD7 and TGFBR1; SMAD7 recruits SMURF1 to TGFBR1 and regulates TGF-beta receptor degradation. Interacts with MAVS; the interaction is mediated by NDFIP1. In terms of processing, auto-ubiquitinated in presence of NDFIP1. Ubiquitinated by the SCF(FBXL15) complex at Lys-381 and Lys-383, leading to its degradation by the proteasome. Lys-383 is the primary ubiquitination site. As to expression, expressed in melanocytes.

The protein localises to the cytoplasm. The protein resides in the cell membrane. The enzyme catalyses S-ubiquitinyl-[E2 ubiquitin-conjugating enzyme]-L-cysteine + [acceptor protein]-L-lysine = [E2 ubiquitin-conjugating enzyme]-L-cysteine + N(6)-ubiquitinyl-[acceptor protein]-L-lysine.. It participates in protein modification; protein ubiquitination. Functionally, E3 ubiquitin-protein ligase that acts as a negative regulator of BMP signaling pathway. Mediates ubiquitination and degradation of SMAD1 and SMAD5, 2 receptor-regulated SMADs specific for the BMP pathway. Promotes ubiquitination and subsequent proteasomal degradation of TRAF family members and RHOA. Promotes ubiquitination and subsequent proteasomal degradation of MAVS. Acts as an antagonist of TGF-beta signaling by ubiquitinating TGFBR1 and targeting it for degradation. Plays a role in dendrite formation by melanocytes. This chain is E3 ubiquitin-protein ligase SMURF1 (SMURF1), found in Homo sapiens (Human).